We begin with the raw amino-acid sequence, 123 residues long: CD59 glycoprotein (123 aa).

An N-terminal signal peptide occupies residues 1 to 25 (MGSKGGFILLWLLSILAVLCHLGHS). The region spanning 26–103 (LQCYNCINPA…LCNKSDATIS (78 aa)) is the UPAR/Ly6 domain. 5 disulfide bridges follow: Cys-28–Cys-51, Cys-31–Cys-38, Cys-44–Cys-65, Cys-71–Cys-89, and Cys-90–Cys-95. Residue Asn-43 is glycosylated (N-linked (GlcNAc...) asparagine). A lipid anchor (GPI-anchor amidated serine) is attached at Ser-98. A propeptide spans 99 to 123 (DATISSGKTALLVILLLVATWHFCL) (removed in mature form).

Interacts with T-cell surface antigen CD2. Post-translationally, N- and O-glycosylated. In terms of tissue distribution, expressed in all tissues tested (lung, testis liver, kidney, spleen, heart and skeletal muscle). Highest levels in lung and spleen, lowest levels in liver and skeletal muscle.

It localises to the cell membrane. The protein localises to the secreted. Potent inhibitor of the complement membrane attack complex (MAC) action, which protects self-cells from damage during complement activation. Acts by binding to the beta-haipins of C8 (C8A and C8B) components of the assembling MAC, forming an intermolecular beta-sheet that prevents incorporation of the multiple copies of C9 required for complete formation of the osmolytic pore. The sequence is that of CD59 glycoprotein from Sus scrofa (Pig).